Here is an 831-residue protein sequence, read N- to C-terminus: G-type lectin S-receptor-like serine/threonine-protein kinase At1g61390 (831 aa).

Residues M1 to A42 form the signal peptide. The Bulb-type lectin domain occupies D43–F162. Over D43–T448 the chain is Extracellular. N-linked (GlcNAc...) asparagine glycans are attached at residues N45, N71, N106, and N112. An EGF-like; atypical domain is found at P298–D334. Disulfide bonds link C302–C314 and C308–C322. N340, N356, N399, and N446 each carry an N-linked (GlcNAc...) asparagine glycan. Positions C353–S439 constitute a PAN domain. Disulfide bonds link C392–C413 and C396–C402. The chain crosses the membrane as a helical span at residues K449–Y469. Residues K470–R831 lie on the Cytoplasmic side of the membrane. Residues F520–F803 enclose the Protein kinase domain. Residues L526–V534 and K548 contribute to the ATP site. Phosphoserine occurs at positions 554 and 569. The tract at residues T609–V626 is caM-binding. D645 (proton acceptor) is an active-site residue. Residues S649 and S662 each carry the phosphoserine modification. T679 carries the post-translational modification Phosphothreonine. S722 and S814 each carry phosphoserine.

The protein belongs to the protein kinase superfamily. Ser/Thr protein kinase family.

The protein resides in the cell membrane. It carries out the reaction L-seryl-[protein] + ATP = O-phospho-L-seryl-[protein] + ADP + H(+). The enzyme catalyses L-threonyl-[protein] + ATP = O-phospho-L-threonyl-[protein] + ADP + H(+). This is G-type lectin S-receptor-like serine/threonine-protein kinase At1g61390 from Arabidopsis thaliana (Mouse-ear cress).